The sequence spans 227 residues: PKHD-type hydroxylase azo0608 (227 aa).

In terms of domain architecture, Fe2OG dioxygenase spans 78–178 (RVLTPFFNRY…RVACFMFMQS (101 aa)). Positions 97, 99, and 159 each coordinate Fe cation. Arg169 contacts 2-oxoglutarate.

It depends on Fe(2+) as a cofactor. L-ascorbate serves as cofactor.

This Azoarcus sp. (strain BH72) protein is PKHD-type hydroxylase azo0608.